A 172-amino-acid chain; its full sequence is Endoribonuclease YbeY (172 aa).

The interval 1–21 (MTLHVGAEPAPREDDTEDALR) is disordered. Positions 10 to 21 (APREDDTEDALR) are enriched in basic and acidic residues. Zn(2+) is bound by residues His-134, His-138, and His-144.

Belongs to the endoribonuclease YbeY family. It depends on Zn(2+) as a cofactor.

Its subcellular location is the cytoplasm. In terms of biological role, single strand-specific metallo-endoribonuclease involved in late-stage 70S ribosome quality control and in maturation of the 3' terminus of the 16S rRNA. The polypeptide is Endoribonuclease YbeY (Burkholderia lata (strain ATCC 17760 / DSM 23089 / LMG 22485 / NCIMB 9086 / R18194 / 383)).